The sequence spans 631 residues: DNA mismatch repair protein MutL (631 aa).

It belongs to the DNA mismatch repair MutL/HexB family.

In terms of biological role, this protein is involved in the repair of mismatches in DNA. It is required for dam-dependent methyl-directed DNA mismatch repair. May act as a 'molecular matchmaker', a protein that promotes the formation of a stable complex between two or more DNA-binding proteins in an ATP-dependent manner without itself being part of a final effector complex. The chain is DNA mismatch repair protein MutL from Mannheimia succiniciproducens (strain KCTC 0769BP / MBEL55E).